The following is a 782-amino-acid chain: MADHDVHTAEAVIDNGSFGVRTVRFETGRLARQAGGSAVAYLGDTMVLSATTASKEPREQFDFFPLTVDVEERLYAAGRIPGSFFRREGRPSEEAILTCRLIDRPLRPSFVKGLRNEVQVVVTVLAVDPEHLYDVVAINAASMSTLLAGLPFSGPIGGVRMAHIDGTWVAFPTYSELERATFDMVVAGRVLPDGDVAIMMVEAEATEETIPLIREGAPAPTEEVVAGGLEAAKPFIRTLCAAQSELAARAAKPVTEFPLFRDYEDDVYDAVAATVRDDVARALTIAGKQEREAALDEVANTALGRLGERFAGREKEILAALRALTKKLVRERIIREKVRIDGRGLTDIRPLTAEVGIVPRVHGSALFERGETQILGVTTLNMLRMEQQLDTVSPRTKKRYMHHYNFPPYSTGEVGRVGSPKRREIGHGALAERALIPVLPSREEFPYAIRQVSEAIGSNGSTSMGSVCASTLSLLNAGVPLRAPVAGIAMGLISDTVDGETHYVTLTDILGAEDAYGDMDFKVAGTRDFVTALQLDTKLDGIPASVLAAALPQAREARLTILDVMAKAISEPAPMSPYAPRIITIKIPVDQIGAVIGPKGKIINQIQDDTGAEITIEDDGTIYIGATEGTAAEAARAAISAIANPQLPEVGERYLGTVVKATPFGVFVSLLPGKDGLLHISELRKMAGGRRVENVEDVLKVGDKIQVEIRDIDARGKLSLVPVDVPGAVLAEDAGAGESAASGGAPRSAGGPQPREHQGPGRPRGRGGDHGGEGRQRTRRRH.

Residues Asp514 and Asp520 each contribute to the Mg(2+) site. Positions 580 to 639 (PRIITIKIPVDQIGAVIGPKGKIINQIQDDTGAEITIEDDGTIYIGATEGTAAEAARAAI) constitute a KH domain. The region spanning 651-723 (GERYLGTVVK…ARGKLSLVPV (73 aa)) is the S1 motif domain. The span at 734 to 753 (AGAGESAASGGAPRSAGGPQ) shows a compositional bias: low complexity. Positions 734 to 782 (AGAGESAASGGAPRSAGGPQPREHQGPGRPRGRGGDHGGEGRQRTRRRH) are disordered. Over residues 766–776 (RGGDHGGEGRQ) the composition is skewed to basic and acidic residues.

This sequence belongs to the polyribonucleotide nucleotidyltransferase family. Requires Mg(2+) as cofactor.

The protein localises to the cytoplasm. It catalyses the reaction RNA(n+1) + phosphate = RNA(n) + a ribonucleoside 5'-diphosphate. Involved in mRNA degradation. Catalyzes the phosphorolysis of single-stranded polyribonucleotides processively in the 3'- to 5'-direction. This Acidothermus cellulolyticus (strain ATCC 43068 / DSM 8971 / 11B) protein is Polyribonucleotide nucleotidyltransferase.